The sequence spans 361 residues: Histidinol-phosphate aminotransferase (361 aa).

Lys-220 carries the N6-(pyridoxal phosphate)lysine modification.

The protein belongs to the class-II pyridoxal-phosphate-dependent aminotransferase family. Histidinol-phosphate aminotransferase subfamily. In terms of assembly, homodimer. It depends on pyridoxal 5'-phosphate as a cofactor.

The enzyme catalyses L-histidinol phosphate + 2-oxoglutarate = 3-(imidazol-4-yl)-2-oxopropyl phosphate + L-glutamate. It functions in the pathway amino-acid biosynthesis; L-histidine biosynthesis; L-histidine from 5-phospho-alpha-D-ribose 1-diphosphate: step 7/9. The chain is Histidinol-phosphate aminotransferase from Syntrophus aciditrophicus (strain SB).